Here is a 494-residue protein sequence, read N- to C-terminus: Glutamyl-tRNA(Gln) amidotransferase subunit A (494 aa).

Residues Lys79 and Ser159 each act as charge relay system in the active site. Ser183 acts as the Acyl-ester intermediate in catalysis.

It belongs to the amidase family. GatA subfamily. Heterotrimer of A, B and C subunits.

It carries out the reaction L-glutamyl-tRNA(Gln) + L-glutamine + ATP + H2O = L-glutaminyl-tRNA(Gln) + L-glutamate + ADP + phosphate + H(+). Functionally, allows the formation of correctly charged Gln-tRNA(Gln) through the transamidation of misacylated Glu-tRNA(Gln) in organisms which lack glutaminyl-tRNA synthetase. The reaction takes place in the presence of glutamine and ATP through an activated gamma-phospho-Glu-tRNA(Gln). This is Glutamyl-tRNA(Gln) amidotransferase subunit A from Bartonella tribocorum (strain CIP 105476 / IBS 506).